We begin with the raw amino-acid sequence, 520 residues long: Type I restriction enzyme EcoprrI methylase subunit (520 aa).

S-adenosyl-L-methionine is bound by residues 198–203 (EFFTPQ), 230–232 (SGS), and Glu-254.

The protein belongs to the N(4)/N(6)-methyltransferase family. The type I restriction/modification system is composed of three polypeptides R, M and S; the restriction enzyme has stoichiometry R(2)M(2)S(1) while the methyltransferase is M(2)S(1).

The enzyme catalyses a 2'-deoxyadenosine in DNA + S-adenosyl-L-methionine = an N(6)-methyl-2'-deoxyadenosine in DNA + S-adenosyl-L-homocysteine + H(+). In terms of biological role, the subtype gamma methyltransferase (M) subunit of a type I restriction enzyme. The M and S subunits together form a methyltransferase (MTase) that methylates two adenine residues of the sequence 5'-CCAN(7)ATGC-3'. In the presence of the R subunit the complex can also act as an endonuclease, binding to the same target sequence but cutting the DNA some distance from this site. Whether the DNA is cut or modified depends on the methylation state of the target sequence. When the target site is unmodified, the DNA is cut. When the target site is hemimethylated, the complex acts as a maintenance MTase modifying the DNA so that both strands become methylated. After locating a non-methylated recognition site, the enzyme complex serves as a molecular motor that translocates DNA in an ATP-dependent manner until a collision occurs that triggers cleavage. This Escherichia coli protein is Type I restriction enzyme EcoprrI methylase subunit.